Here is a 61-residue protein sequence, read N- to C-terminus: Small ribosomal subunit protein uS14B (61 aa).

The Zn(2+) site is built by Cys24, Cys27, Cys40, and Cys43.

This sequence belongs to the universal ribosomal protein uS14 family. Zinc-binding uS14 subfamily. As to quaternary structure, part of the 30S ribosomal subunit. Contacts proteins S3 and S10. Zn(2+) serves as cofactor.

Functionally, binds 16S rRNA, required for the assembly of 30S particles and may also be responsible for determining the conformation of the 16S rRNA at the A site. The protein is Small ribosomal subunit protein uS14B of Levilactobacillus brevis (strain ATCC 367 / BCRC 12310 / CIP 105137 / JCM 1170 / LMG 11437 / NCIMB 947 / NCTC 947) (Lactobacillus brevis).